Reading from the N-terminus, the 590-residue chain is V-type ATP synthase alpha chain (590 aa).

232–239 (GPFGSGKT) is an ATP binding site.

It belongs to the ATPase alpha/beta chains family.

The enzyme catalyses ATP + H2O + 4 H(+)(in) = ADP + phosphate + 5 H(+)(out). Produces ATP from ADP in the presence of a proton gradient across the membrane. The V-type alpha chain is a catalytic subunit. This is V-type ATP synthase alpha chain from Thermoanaerobacter sp. (strain X514).